Reading from the N-terminus, the 222-residue chain is Putative auxin response factor 23 (222 aa).

A DNA-binding region (TF-B3) is located at residues 126-222 (FTKVLTASDT…ETGELRVGIR (97 aa)).

It belongs to the ARF family. As to quaternary structure, homo and heterodimers.

The protein localises to the nucleus. Its function is as follows. Auxin response factors (ARFs) are transcriptional factors that binds specifically to the DNA sequence 5'-TGTCTC-3' found in the auxin-responsive promoter elements (AuxREs). Could act as transcriptional activator or repressor. Formation of heterodimers with Aux/IAA proteins may alter their ability to modulate early auxin response genes expression. The polypeptide is Putative auxin response factor 23 (ARF23) (Arabidopsis thaliana (Mouse-ear cress)).